A 1403-amino-acid chain; its full sequence is DNA-directed RNA polymerase subunit beta' (1403 aa).

4 residues coordinate Zn(2+): Cys71, Cys73, Cys86, and Cys89. Residues Asp462, Asp464, and Asp466 each contribute to the Mg(2+) site. Zn(2+) contacts are provided by Cys811, Cys885, Cys892, and Cys895.

The protein belongs to the RNA polymerase beta' chain family. As to quaternary structure, the RNAP catalytic core consists of 2 alpha, 1 beta, 1 beta' and 1 omega subunit. When a sigma factor is associated with the core the holoenzyme is formed, which can initiate transcription. The cofactor is Mg(2+). Requires Zn(2+) as cofactor.

The catalysed reaction is RNA(n) + a ribonucleoside 5'-triphosphate = RNA(n+1) + diphosphate. Functionally, DNA-dependent RNA polymerase catalyzes the transcription of DNA into RNA using the four ribonucleoside triphosphates as substrates. This chain is DNA-directed RNA polymerase subunit beta', found in Bartonella tribocorum (strain CIP 105476 / IBS 506).